Here is a 272-residue protein sequence, read N- to C-terminus: TIP41-like protein (272 aa).

K106 carries the post-translational modification N6-acetyllysine. Residues 173–272 are interaction with PPP2CA; that stretch reads RVMPSSFFLL…ADSQKSTQVE (100 aa). The residue at position 265 (S265) is a Phosphoserine.

The protein belongs to the TIP41 family. Isoform 1 interacts with PPP2CA. Isoform 2 does not interact with PPP2CA. Interacts with PPP2CB, PPP4C and PPP6C. Interacts with IGBP1; the interaction is dependent on PPP2CA. Associates with a protein phosphatase 2A PP2A(C):IGBP1 complex. Interacts with PPP4C and PPP4R2.

The protein localises to the cytoplasm. In terms of biological role, may be a allosteric regulator of serine/threonine-protein phosphatase 2A (PP2A). Isoform 1 inhibits catalytic activity of the PP2A(D) core complex in vitro. The PP2A(C):TIPRL complex does not show phosphatase activity. Acts as a negative regulator of serine/threonine-protein phosphatase 4 probably by inhibiting the formation of the active PPP4C:PPP4R2 complex; the function is proposed to implicate it in DNA damage response by promoting H2AX phosphorylated on Ser-140 (gamma-H2AX). May play a role in the regulation of ATM/ATR signaling pathway controlling DNA replication and repair. The chain is TIP41-like protein (TIPRL) from Homo sapiens (Human).